The primary structure comprises 364 residues: Methylthioribose-1-phosphate isomerase (364 aa).

Substrate is bound by residues 49–51 (RGA), R89, and Q201. D242 functions as the Proton donor in the catalytic mechanism. Substrate is bound at residue 252–253 (NK).

Belongs to the eIF-2B alpha/beta/delta subunits family. MtnA subfamily.

It catalyses the reaction 5-(methylsulfanyl)-alpha-D-ribose 1-phosphate = 5-(methylsulfanyl)-D-ribulose 1-phosphate. The protein operates within amino-acid biosynthesis; L-methionine biosynthesis via salvage pathway; L-methionine from S-methyl-5-thio-alpha-D-ribose 1-phosphate: step 1/6. Its function is as follows. Catalyzes the interconversion of methylthioribose-1-phosphate (MTR-1-P) into methylthioribulose-1-phosphate (MTRu-1-P). The sequence is that of Methylthioribose-1-phosphate isomerase from Leptospira interrogans serogroup Icterohaemorrhagiae serovar Lai (strain 56601).